Here is a 341-residue protein sequence, read N- to C-terminus: L-sulfolactate dehydrogenase (341 aa).

It belongs to the LDH2/MDH2 oxidoreductase family.

The protein resides in the cytoplasm. The enzyme catalyses a (2S)-2-hydroxycarboxylate + NAD(+) = a 2-oxocarboxylate + NADH + H(+). It functions in the pathway cofactor biosynthesis; coenzyme M biosynthesis; sulfoacetaldehyde from phosphoenolpyruvate and sulfite: step 3/4. Its pathway is cofactor biosynthesis; 5,6,7,8-tetrahydromethanopterin biosynthesis. Catalyzes the reduction of sulfopyruvate to (R)-sulfolactate. Involved in the biosynthesis of both coenzyme M (with (R)-sulfolactate) and methanopterin (with alpha-ketoglutarate). In Methanothermobacter thermautotrophicus (strain ATCC 29096 / DSM 1053 / JCM 10044 / NBRC 100330 / Delta H) (Methanobacterium thermoautotrophicum), this protein is L-sulfolactate dehydrogenase (comC).